The chain runs to 316 residues: N-acetyl-gamma-glutamyl-phosphate reductase (316 aa).

C136 is a catalytic residue.

Belongs to the NAGSA dehydrogenase family. Type 1 subfamily.

The protein localises to the cytoplasm. It catalyses the reaction N-acetyl-L-glutamate 5-semialdehyde + phosphate + NADP(+) = N-acetyl-L-glutamyl 5-phosphate + NADPH + H(+). It participates in amino-acid biosynthesis; L-arginine biosynthesis; N(2)-acetyl-L-ornithine from L-glutamate: step 3/4. In terms of biological role, catalyzes the NADPH-dependent reduction of N-acetyl-5-glutamyl phosphate to yield N-acetyl-L-glutamate 5-semialdehyde. This chain is N-acetyl-gamma-glutamyl-phosphate reductase, found in Xanthomonas axonopodis pv. citri (strain 306).